We begin with the raw amino-acid sequence, 466 residues long: 3-isopropylmalate dehydratase large subunit (466 aa).

[4Fe-4S] cluster is bound by residues C349, C410, and C413.

The protein belongs to the aconitase/IPM isomerase family. LeuC type 1 subfamily. In terms of assembly, heterodimer of LeuC and LeuD. Requires [4Fe-4S] cluster as cofactor.

The catalysed reaction is (2R,3S)-3-isopropylmalate = (2S)-2-isopropylmalate. The protein operates within amino-acid biosynthesis; L-leucine biosynthesis; L-leucine from 3-methyl-2-oxobutanoate: step 2/4. Catalyzes the isomerization between 2-isopropylmalate and 3-isopropylmalate, via the formation of 2-isopropylmaleate. The sequence is that of 3-isopropylmalate dehydratase large subunit from Vesicomyosocius okutanii subsp. Calyptogena okutanii (strain HA).